Consider the following 102-residue polypeptide: Urease subunit beta (102 aa).

The protein belongs to the urease beta subunit family. In terms of assembly, heterotrimer of UreA (gamma), UreB (beta) and UreC (alpha) subunits. Three heterotrimers associate to form the active enzyme.

It is found in the cytoplasm. The enzyme catalyses urea + 2 H2O + H(+) = hydrogencarbonate + 2 NH4(+). Its pathway is nitrogen metabolism; urea degradation; CO(2) and NH(3) from urea (urease route): step 1/1. This is Urease subunit beta from Methylobacillus flagellatus (strain ATCC 51484 / DSM 6875 / VKM B-1610 / KT).